The primary structure comprises 664 residues: Kinesin-like protein KIF2B (664 aa).

Thr125 carries the post-translational modification Phosphothreonine; by PLK1. Positions 149-177 form a coiled coil; sequence CLREIEKLQKQREKRRRLQLEIRARRALD. Ser204 carries the post-translational modification Phosphoserine; by PLK1. The Kinesin motor domain maps to 213–543; the sequence is RICVCVRKRP…LRYANRVKEL (331 aa). 303–310 serves as a coordination point for ATP; the sequence is GQTGSGKT. Positions 583-607 are disordered; it reads VQKEEEKESDELTSTKEPAASWSRS. Residues 642–663 are a coiled coil; it reads VLTEIQKKLQLLRDDLQKKSQA.

The protein belongs to the TRAFAC class myosin-kinesin ATPase superfamily. Kinesin family. MCAK/KIF2 subfamily. In terms of processing, phosphorylation at Thr-125 by PLK1 is required for activity in the correction of kinetochore-microtubules attachment errors, while phosphorylation at Ser-204 also by PLK1 is required for the kinetochore localization and activity in prometaphase.

The protein localises to the cytoplasm. Its subcellular location is the cytoskeleton. The protein resides in the microtubule organizing center. It is found in the centrosome. It localises to the spindle. The protein localises to the chromosome. Its subcellular location is the centromere. The protein resides in the kinetochore. Functionally, plus end-directed microtubule-dependent motor required for spindle assembly and chromosome movement. Has microtubule depolymerization activity. Plays a role in chromosome congression. This Rattus norvegicus (Rat) protein is Kinesin-like protein KIF2B.